The following is a 402-amino-acid chain: BTB and MATH domain-containing protein 40 (402 aa).

The interval 1–25 (MSDRHLYGSDHSYLSSKPSCSSCRR) is disordered. Residues 15 to 25 (SSKPSCSSCRR) show a composition bias toward low complexity. The 135-residue stretch at 43-177 (VLTQRWTVCN…DKSLVISCHI (135 aa)) folds into the MATH domain. The BTB domain occupies 222 to 295 (TDMTIVAGPL…IYAGVIKSDI (74 aa)).

Interacts with cul-3.

It participates in protein modification; protein ubiquitination. In terms of biological role, probable substrate-specific adapter of an E3 ubiquitin-protein ligase complex which mediates the ubiquitination and subsequent proteasomal degradation of target proteins. The chain is BTB and MATH domain-containing protein 40 (bath-40) from Caenorhabditis elegans.